The chain runs to 282 residues: Undecaprenyl-diphosphatase (282 aa).

The next 6 membrane-spanning stretches (helical) occupy residues 51–71, 87–107, 115–135, 191–211, 229–249, and 259–279; these read TLVA…AAVI, MGWM…LFET, SLYW…LAEG, ATAA…AGLY, NILV…AFLL, and IFIA…ATGV.

Belongs to the UppP family.

The protein resides in the cell inner membrane. It carries out the reaction di-trans,octa-cis-undecaprenyl diphosphate + H2O = di-trans,octa-cis-undecaprenyl phosphate + phosphate + H(+). Functionally, catalyzes the dephosphorylation of undecaprenyl diphosphate (UPP). Confers resistance to bacitracin. This chain is Undecaprenyl-diphosphatase, found in Pelodictyon phaeoclathratiforme (strain DSM 5477 / BU-1).